Consider the following 747-residue polypeptide: Ubiquitin carboxyl-terminal hydrolase 13 (747 aa).

One can recognise a USP domain in the interval 140–668 (FGYENFGNTC…TAYVLFYKAM (529 aa)). The active-site Nucleophile is Cys-149. 2 disordered regions span residues 172–305 (PKKS…RPPD) and 318–367 (YENP…RKKS). Basic and acidic residues predominate over residues 174-183 (KSRESDQPRK). Ser-198 carries the phosphoserine modification. A compositionally biased stretch (polar residues) spans 225–235 (PVNSVNSNTAG). The segment covering 251–260 (HVQDNNKKEG) has biased composition (basic and acidic residues). Residues 319–343 (ENPSRGSSNSNNLDLKGESNSSLST) show a composition bias toward polar residues. The active-site Proton acceptor is the His-619.

Belongs to the peptidase C19 family.

The enzyme catalyses Thiol-dependent hydrolysis of ester, thioester, amide, peptide and isopeptide bonds formed by the C-terminal Gly of ubiquitin (a 76-residue protein attached to proteins as an intracellular targeting signal).. This Saccharomyces cerevisiae (strain ATCC 204508 / S288c) (Baker's yeast) protein is Ubiquitin carboxyl-terminal hydrolase 13 (UBP13).